The sequence spans 181 residues: Oligoribonuclease (181 aa).

The Exonuclease domain maps to 8–171 (LIWVDLEMTG…DDIRESIAEL (164 aa)). Residue Tyr-129 is part of the active site.

It belongs to the oligoribonuclease family.

It localises to the cytoplasm. Functionally, 3'-to-5' exoribonuclease specific for small oligoribonucleotides. The chain is Oligoribonuclease from Vibrio campbellii (strain ATCC BAA-1116).